The primary structure comprises 367 residues: Isocitrate dehydrogenase [NAD] regulatory subunit 1, mitochondrial (367 aa).

The transit peptide at Met-1–Ser-25 directs the protein to the mitochondrion.

It belongs to the isocitrate and isopropylmalate dehydrogenases family. As to quaternary structure, heterooligomer of catalytic and regulatory subunits. In terms of tissue distribution, ubiquitous. Predominantly expressed in roots, stems and leaves.

Its subcellular location is the mitochondrion. Performs an essential role in the oxidative function of the citric acid cycle. The polypeptide is Isocitrate dehydrogenase [NAD] regulatory subunit 1, mitochondrial (IDH1) (Arabidopsis thaliana (Mouse-ear cress)).